The chain runs to 46 residues: Acetylajmalan esterase (46 aa).

N-linked (GlcNAc...) asparagine glycosylation is present at Asn-39.

It belongs to the 'GDSL' lipolytic enzyme family.

It carries out the reaction 17-O-acetylajmaline + H2O = ajmaline + acetate + H(+). It catalyses the reaction 17-O-acetylnorajmaline + H2O = norajmaline + acetate + H(+). Deacetylates 17-O-acetylajmaline and 17-O-acetylnorajmaline, but is inactive toward other acetylated alkaloids. The chain is Acetylajmalan esterase from Rauvolfia verticillata (Common devil-pepper).